The following is a 454-amino-acid chain: tRNA modification GTPase MnmE (454 aa).

(6S)-5-formyl-5,6,7,8-tetrahydrofolate contacts are provided by Arg-23, Glu-80, and Lys-120. One can recognise a TrmE-type G domain in the interval 216 to 377; the sequence is GMKVVIAGRP…LRNHLKQSMG (162 aa). Position 226 (Asn-226) interacts with K(+). Residues 226 to 231, 245 to 251, 270 to 273, 335 to 338, and 358 to 360 contribute to the GTP site; these read NAGKSS, TDIAGTT, DTAG, NKAD, and SAR. Ser-230 provides a ligand contact to Mg(2+). The K(+) site is built by Thr-245, Ile-247, and Thr-250. Position 251 (Thr-251) interacts with Mg(2+). Lys-454 is a binding site for (6S)-5-formyl-5,6,7,8-tetrahydrofolate.

Belongs to the TRAFAC class TrmE-Era-EngA-EngB-Septin-like GTPase superfamily. TrmE GTPase family. In terms of assembly, homodimer. Heterotetramer of two MnmE and two MnmG subunits. K(+) serves as cofactor.

The protein localises to the cytoplasm. Exhibits a very high intrinsic GTPase hydrolysis rate. Involved in the addition of a carboxymethylaminomethyl (cmnm) group at the wobble position (U34) of certain tRNAs, forming tRNA-cmnm(5)s(2)U34. The protein is tRNA modification GTPase MnmE of Salmonella arizonae (strain ATCC BAA-731 / CDC346-86 / RSK2980).